The chain runs to 348 residues: Holliday junction branch migration complex subunit RuvB (348 aa).

The large ATPase domain (RuvB-L) stretch occupies residues 4 to 186 (TDRIISANTA…FGIIQRLEFY (183 aa)). Residues Ile25, Arg26, Gly67, Lys70, Thr71, Thr72, 133–135 (EDY), Arg176, Tyr186, and Arg223 contribute to the ATP site. Thr71 lines the Mg(2+) pocket. A small ATPAse domain (RuvB-S) region spans residues 187–257 (SIDDLSKIVY…IADKALSMLK (71 aa)). Positions 260 to 348 (PVGFDHMDHR…SADQQQTLSI (89 aa)) are head domain (RuvB-H). Arg315 and Arg320 together coordinate DNA.

This sequence belongs to the RuvB family. As to quaternary structure, homohexamer. Forms an RuvA(8)-RuvB(12)-Holliday junction (HJ) complex. HJ DNA is sandwiched between 2 RuvA tetramers; dsDNA enters through RuvA and exits via RuvB. An RuvB hexamer assembles on each DNA strand where it exits the tetramer. Each RuvB hexamer is contacted by two RuvA subunits (via domain III) on 2 adjacent RuvB subunits; this complex drives branch migration. In the full resolvosome a probable DNA-RuvA(4)-RuvB(12)-RuvC(2) complex forms which resolves the HJ.

The protein resides in the cytoplasm. The enzyme catalyses ATP + H2O = ADP + phosphate + H(+). In terms of biological role, the RuvA-RuvB-RuvC complex processes Holliday junction (HJ) DNA during genetic recombination and DNA repair, while the RuvA-RuvB complex plays an important role in the rescue of blocked DNA replication forks via replication fork reversal (RFR). RuvA specifically binds to HJ cruciform DNA, conferring on it an open structure. The RuvB hexamer acts as an ATP-dependent pump, pulling dsDNA into and through the RuvAB complex. RuvB forms 2 homohexamers on either side of HJ DNA bound by 1 or 2 RuvA tetramers; 4 subunits per hexamer contact DNA at a time. Coordinated motions by a converter formed by DNA-disengaged RuvB subunits stimulates ATP hydrolysis and nucleotide exchange. Immobilization of the converter enables RuvB to convert the ATP-contained energy into a lever motion, pulling 2 nucleotides of DNA out of the RuvA tetramer per ATP hydrolyzed, thus driving DNA branch migration. The RuvB motors rotate together with the DNA substrate, which together with the progressing nucleotide cycle form the mechanistic basis for DNA recombination by continuous HJ branch migration. Branch migration allows RuvC to scan DNA until it finds its consensus sequence, where it cleaves and resolves cruciform DNA. The sequence is that of Holliday junction branch migration complex subunit RuvB from Francisella tularensis subsp. tularensis (strain FSC 198).